Consider the following 349-residue polypeptide: MRSVLYSYILFLSCIIINGRDIAPHAPSNGKCKDNEYRSRNLCCLSCPPGTYASRLCDSKTNTQCTPCGSDTFTSHNNHLQACLSCNGRCDSNQVETRSCNTTHNRICECSPGYYCLLKGASGCRTCISKTKCGIGYGVSGYTSTGDVICSPCGPGTYSHTVSSTDKCEPVVTSNTFNYIDVEINLYPVNDTSCTRTTTTGLSESISTSELTITMNHKDCDPVFRAEYFSVLNNVATSGFFTGENRYQNTSKICTLNFEIKCNNKDSSSKQLTKTKNDTIMPHSETVTLVGDCLSSVDIYILYSNTNTQDYENDTISYHMGNVLDVNSHMPASCDIHKLITNSQNPTHL.

The N-terminal stretch at 1 to 19 (MRSVLYSYILFLSCIIING) is a signal peptide. TNFR-Cys repeat units follow at residues 31 to 65 (KCKD…NTQC) and 67 to 108 (PCGS…NRIC). Cystine bridges form between C32–C43, C44–C57, C47–C65, C68–C83, C86–C100, and C90–C108. N101, N190, N249, N277, and N313 each carry an N-linked (GlcNAc...) asparagine; by host glycan.

This sequence belongs to the orthopoxvirus OPG002 family.

The protein resides in the secreted. Functionally, inhibits host immune defense by binding to host TNF and various chemokines in the extracellular space. Binds host CC chemokines (beta chemokines) and CXC chemokines (alpha chemokines). The polypeptide is Soluble TNF receptor II (OPG002) (Monkeypox virus).